Reading from the N-terminus, the 281-residue chain is NADH-quinone oxidoreductase subunit B (281 aa).

[4Fe-4S] cluster contacts are provided by Cys-37, Cys-38, Cys-103, and Cys-132. A disordered region spans residues 242–281 (DAKPLDESRAHGPGPTTADIADAADTADSDAAPGATHDTP). A compositionally biased stretch (low complexity) spans 257-281 (TTADIADAADTADSDAAPGATHDTP).

Belongs to the complex I 20 kDa subunit family. As to quaternary structure, NDH-1 is composed of 14 different subunits. Subunits NuoB, C, D, E, F, and G constitute the peripheral sector of the complex. [4Fe-4S] cluster serves as cofactor.

The protein localises to the cell membrane. The enzyme catalyses a quinone + NADH + 5 H(+)(in) = a quinol + NAD(+) + 4 H(+)(out). Functionally, NDH-1 shuttles electrons from NADH, via FMN and iron-sulfur (Fe-S) centers, to quinones in the respiratory chain. The immediate electron acceptor for the enzyme in this species is believed to be a menaquinone. Couples the redox reaction to proton translocation (for every two electrons transferred, four hydrogen ions are translocated across the cytoplasmic membrane), and thus conserves the redox energy in a proton gradient. The polypeptide is NADH-quinone oxidoreductase subunit B (Frankia alni (strain DSM 45986 / CECT 9034 / ACN14a)).